The following is a 130-amino-acid chain: Glycine cleavage system H protein (130 aa).

A Lipoyl-binding domain is found at 28–110 (TVRIGITSVA…FGEGWLFEVE (83 aa)). Position 69 is an N6-lipoyllysine (Lys69).

The protein belongs to the GcvH family. In terms of assembly, the glycine cleavage system is composed of four proteins: P, T, L and H. Requires (R)-lipoate as cofactor.

Its function is as follows. The glycine cleavage system catalyzes the degradation of glycine. The H protein shuttles the methylamine group of glycine from the P protein to the T protein. The polypeptide is Glycine cleavage system H protein (Corynebacterium aurimucosum (strain ATCC 700975 / DSM 44827 / CIP 107346 / CN-1) (Corynebacterium nigricans)).